A 149-amino-acid chain; its full sequence is Large ribosomal subunit protein bL9 (149 aa).

Belongs to the bacterial ribosomal protein bL9 family.

Functionally, binds to the 23S rRNA. The protein is Large ribosomal subunit protein bL9 of Cutibacterium acnes (strain DSM 16379 / KPA171202) (Propionibacterium acnes).